The following is a 262-amino-acid chain: Polyamine aminopropyltransferase (262 aa).

The 249-residue stretch at 1–249 (MWITQEITPY…DIHRAAFALP (249 aa)) folds into the PABS domain. Asn-29 contacts S-methyl-5'-thioadenosine. Asp-83 contributes to the spermidine binding site. Asp-155 acts as the Proton acceptor in catalysis.

Belongs to the spermidine/spermine synthase family. Homodimer or homotetramer.

The protein resides in the cytoplasm. It catalyses the reaction S-adenosyl 3-(methylsulfanyl)propylamine + putrescine = S-methyl-5'-thioadenosine + spermidine + H(+). Its pathway is amine and polyamine biosynthesis; spermidine biosynthesis; spermidine from putrescine: step 1/1. In terms of biological role, catalyzes the irreversible transfer of a propylamine group from the amino donor S-adenosylmethioninamine (decarboxy-AdoMet) to putrescine (1,4-diaminobutane) to yield spermidine. This chain is Polyamine aminopropyltransferase, found in Helicobacter pylori (strain G27).